The primary structure comprises 236 residues: tRNA (guanine-N(7)-)-methyltransferase (236 aa).

Residues Glu43, Asp68, Asn102, and Asn125 each coordinate S-adenosyl-L-methionine. Residues Lys129 and Asp161 each coordinate substrate.

This sequence belongs to the class I-like SAM-binding methyltransferase superfamily. TrmB family.

The catalysed reaction is guanosine(46) in tRNA + S-adenosyl-L-methionine = N(7)-methylguanosine(46) in tRNA + S-adenosyl-L-homocysteine. Its pathway is tRNA modification; N(7)-methylguanine-tRNA biosynthesis. Catalyzes the formation of N(7)-methylguanine at position 46 (m7G46) in tRNA. The polypeptide is tRNA (guanine-N(7)-)-methyltransferase (Ruminiclostridium cellulolyticum (strain ATCC 35319 / DSM 5812 / JCM 6584 / H10) (Clostridium cellulolyticum)).